The sequence spans 215 residues: Probable phosphoglycerate mutase GpmB (215 aa).

Substrate-binding positions include 8 to 15 (RHGETLWN), 21 to 22 (QG), Arg58, Arg60, 82 to 85 (ELNM), and 151 to 152 (GM). His9 serves as the catalytic Tele-phosphohistidine intermediate. The active-site Proton donor/acceptor is the Glu82.

This sequence belongs to the phosphoglycerate mutase family. GpmB subfamily.

The catalysed reaction is (2R)-2-phosphoglycerate = (2R)-3-phosphoglycerate. Its pathway is carbohydrate degradation; glycolysis; pyruvate from D-glyceraldehyde 3-phosphate: step 3/5. The sequence is that of Probable phosphoglycerate mutase GpmB from Erwinia tasmaniensis (strain DSM 17950 / CFBP 7177 / CIP 109463 / NCPPB 4357 / Et1/99).